Here is a 254-residue protein sequence, read N- to C-terminus: Aquaporin TIP1-2 (254 aa).

2 helical membrane-spanning segments follow: residues 24 to 44 (VAEF…GMAF) and 56 to 76 (AGLI…VSVG). The NPA 1 signature appears at 85 to 87 (NPA). The next 3 helical transmembrane spans lie at 103–123 (ALVY…LLKI), 144–164 (AVVL…ATAV), and 173–193 (VIAP…GGAF). Residues 199-201 (NPA) carry the NPA 2 motif. A helical transmembrane segment spans residues 220–240 (WVGPLAGAAIAALVYDIIFIG).

This sequence belongs to the MIP/aquaporin (TC 1.A.8) family. TIP (TC 1.A.8.10) subfamily.

The protein localises to the vacuole membrane. Functionally, aquaporins facilitate the transport of water and small neutral solutes across cell membranes. This Zea mays (Maize) protein is Aquaporin TIP1-2 (TIP1-2).